Consider the following 198-residue polypeptide: COMM domain-containing protein 9 (198 aa).

Position 2 is an N-acetylalanine (Ala-2). The region spanning 122 to 196 (RLVDLDWRVD…RIRDQLSAVA (75 aa)) is the COMM domain.

This sequence belongs to the COMM domain-containing protein 9 family. Component of the commander complex consisting of the CCC subcomplex and the retriever subcomplex. Component of the CCC (COMMD/CCDC22/CCDC93) subcomplex consisting of COMMD1, COMMD2, COMMD3, COMMD4, COMMD5, COMMD6, COMMD7, COMMD8, COMMD9, COMMD10, CCDC22 and CCDC93; within the complex forms a heterodimer with COMMD7. Interacts with RELB and NFKB1/p105. Interacts with CCDC22, CCDC93, SCNN1B, CUL1. In terms of tissue distribution, ubiquitous.

The protein resides in the nucleus. It is found in the cytoplasmic vesicle. In terms of biological role, scaffold protein in the commander complex that is essential for endosomal recycling of transmembrane cargos; the commander complex is composed of the CCC subcomplex and the retriever subcomplex. May modulate activity of cullin-RING E3 ubiquitin ligase (CRL) complexes. May down-regulate activation of NF-kappa-B. Modulates Na(+) transport in epithelial cells by regulation of apical cell surface expression of amiloride-sensitive sodium channel (ENaC) subunits. The polypeptide is COMM domain-containing protein 9 (COMMD9) (Homo sapiens (Human)).